The chain runs to 228 residues: Large ribosomal subunit protein uL3 (228 aa).

The interval 135–159 (MKSQRASHGNSRSHNVPGSIGMAQD) is disordered. The span at 140–150 (ASHGNSRSHNV) shows a compositional bias: polar residues. Gln158 is modified (N5-methylglutamine).

Belongs to the universal ribosomal protein uL3 family. Part of the 50S ribosomal subunit. Forms a cluster with proteins L14 and L19. Post-translationally, methylated by PrmB.

In terms of biological role, one of the primary rRNA binding proteins, it binds directly near the 3'-end of the 23S rRNA, where it nucleates assembly of the 50S subunit. The sequence is that of Large ribosomal subunit protein uL3 from Albidiferax ferrireducens (strain ATCC BAA-621 / DSM 15236 / T118) (Rhodoferax ferrireducens).